Consider the following 244-residue polypeptide: DNA repair protein RecO (244 aa).

It belongs to the RecO family.

Its function is as follows. Involved in DNA repair and RecF pathway recombination. This Polynucleobacter necessarius subsp. necessarius (strain STIR1) protein is DNA repair protein RecO.